The sequence spans 692 residues: Elongation factor G (692 aa).

Residues 8–282 (EKTRNIGIMA…AVVEYMPAPT (275 aa)) enclose the tr-type G domain. GTP is bound by residues 17-24 (AHIDAGKT), 81-85 (DTPGH), and 135-138 (NKMD). The segment at 285-304 (PNIKGVHPETGEADERHSSD) is disordered. Residues 290–304 (VHPETGEADERHSSD) show a composition bias toward basic and acidic residues.

Belongs to the TRAFAC class translation factor GTPase superfamily. Classic translation factor GTPase family. EF-G/EF-2 subfamily.

The protein localises to the cytoplasm. In terms of biological role, catalyzes the GTP-dependent ribosomal translocation step during translation elongation. During this step, the ribosome changes from the pre-translocational (PRE) to the post-translocational (POST) state as the newly formed A-site-bound peptidyl-tRNA and P-site-bound deacylated tRNA move to the P and E sites, respectively. Catalyzes the coordinated movement of the two tRNA molecules, the mRNA and conformational changes in the ribosome. The protein is Elongation factor G of Desulfitobacterium hafniense (strain DSM 10664 / DCB-2).